The primary structure comprises 185 residues: Small ribosomal subunit protein uS5 (185 aa).

Residues 29–92 form the S5 DRBM domain; the sequence is LEEKVVKINR…EKAKKQLVRI (64 aa).

Belongs to the universal ribosomal protein uS5 family. Part of the 30S ribosomal subunit. Contacts proteins S4 and S8.

In terms of biological role, with S4 and S12 plays an important role in translational accuracy. Functionally, located at the back of the 30S subunit body where it stabilizes the conformation of the head with respect to the body. In Aster yellows witches'-broom phytoplasma (strain AYWB), this protein is Small ribosomal subunit protein uS5.